The sequence spans 121 residues: Large ribosomal subunit protein uL22 (121 aa).

Belongs to the universal ribosomal protein uL22 family. Part of the 50S ribosomal subunit.

Its function is as follows. This protein binds specifically to 23S rRNA; its binding is stimulated by other ribosomal proteins, e.g. L4, L17, and L20. It is important during the early stages of 50S assembly. It makes multiple contacts with different domains of the 23S rRNA in the assembled 50S subunit and ribosome. Functionally, the globular domain of the protein is located near the polypeptide exit tunnel on the outside of the subunit, while an extended beta-hairpin is found that lines the wall of the exit tunnel in the center of the 70S ribosome. The sequence is that of Large ribosomal subunit protein uL22 from Synechococcus sp. (strain CC9902).